A 472-amino-acid polypeptide reads, in one-letter code: Adenosylhomocysteinase (472 aa).

Thr62, Asp137, and Glu197 together coordinate substrate. 198-200 provides a ligand contact to NAD(+); it reads TTT. Lys227 and Asp231 together coordinate substrate. Residues Asn232, 261–266, Glu284, Asn319, 340–342, and Asn385 each bind NAD(+); these read GYGDVG and IGH.

This sequence belongs to the adenosylhomocysteinase family. NAD(+) serves as cofactor.

It is found in the cytoplasm. It carries out the reaction S-adenosyl-L-homocysteine + H2O = L-homocysteine + adenosine. It functions in the pathway amino-acid biosynthesis; L-homocysteine biosynthesis; L-homocysteine from S-adenosyl-L-homocysteine: step 1/1. In terms of biological role, may play a key role in the regulation of the intracellular concentration of adenosylhomocysteine. The sequence is that of Adenosylhomocysteinase from Bordetella petrii (strain ATCC BAA-461 / DSM 12804 / CCUG 43448).